We begin with the raw amino-acid sequence, 785 residues long: Ribosome biogenesis protein BOP1 homolog (785 aa).

The span at 1 to 11 (MTKKLTIKRKV) shows a compositional bias: basic residues. Positions 1-160 (MTKKLTIKRK…DSDTSDEEDI (160 aa)) are disordered. Acidic residues-rich tracts occupy residues 45 to 54 (EDSTDDEGID), 61 to 73 (SSEDLEFESDEEG), and 85 to 102 (SGDDDEESAEDEEEEDDA). Residues 103-112 (DAKKSSKNND) show a composition bias toward basic and acidic residues. The span at 150-159 (ADSDTSDEED) shows a compositional bias: acidic residues. 7 WD repeats span residues 446–487 (GHTD…RTIE), 489–527 (EDVVRCVAWCPNAKLSIIAVATGSRLLLVNPKVGDKLLV), 571–613 (THFK…SQIP), 616–654 (KSKGLIQCVLFHPVKPCFFVATQHNIRIYDLVKQELIKK), 657–696 (TNSKWISGMSIHPKGDNLLVSTYDKKMLWFDLDLSTKPYQ), 700–739 (LHRNAVRSVAFHLRYPLFASGSDDQAVIVSHGMVYNDLLQ), and 755–785 (REEFGVLDVNWHPVQPWVFSTGADCTIRLFT).

This sequence belongs to the WD repeat BOP1/ERB1 family.

It is found in the nucleus. Its subcellular location is the nucleolus. The protein resides in the nucleoplasm. Required for maturation of ribosomal RNAs and formation of the large ribosomal subunit. This chain is Ribosome biogenesis protein BOP1 homolog, found in Drosophila persimilis (Fruit fly).